Reading from the N-terminus, the 662-residue chain is PAN2-PAN3 deadenylation complex subunit PAN3 (662 aa).

2 disordered regions span residues 1–29 (MASA…NAKD) and 53–133 (DPHK…DTVT). The C3H1-type zinc finger occupies 26 to 55 (NAKDTLCRNITIYGRCRYEDKGCAFNHDPH). Low complexity predominate over residues 75 to 102 (SFTPSLLSSNGSSPTSTPATTKKMTTIS). Positions 115 to 133 (SVVSRSNASTPGLRQDTVT) are enriched in polar residues. Residues 263-525 (QTLPNTQLPA…NIDVFITGIS (263 aa)) are pseudokinase domain. ATP contacts are provided by residues Arg315, 364–371 (DYHPLSKT), and 425–426 (SK). Positions 526–564 (SQLMSTFDSALHLDDQLTSDLSRELENGRLVRLMAKLNF) form a coiled coil. The interval 565-662 (VNERPEYEHD…ALMKPARRMH (98 aa)) is knob domain.

It belongs to the protein kinase superfamily. PAN3 family. As to quaternary structure, homodimer. Forms a heterotrimer with a catalytic subunit pan2 to form the poly(A)-nuclease (PAN) deadenylation complex. Interacts (via PAM-2 motif) with poly(A)-binding protein pab1 (via PABC domain), conferring substrate specificity of the enzyme complex.

Its subcellular location is the cytoplasm. In terms of biological role, regulatory subunit of the poly(A)-nuclease (PAN) deadenylation complex, one of two cytoplasmic mRNA deadenylases involved in mRNA turnover. PAN specifically shortens poly(A) tails of RNA and the activity is stimulated by poly(A)-binding protein pab1. PAN deadenylation is followed by rapid degradation of the shortened mRNA tails by the CCR4-NOT complex. Deadenylated mRNAs are then degraded by two alternative mechanisms, namely exosome-mediated 3'-5' exonucleolytic degradation, or deadenylation-dependent mRNA decaping and subsequent 5'-3' exonucleolytic degradation by xrn1. May also be involved in post-transcriptional maturation of mRNA poly(A) tails. pan3 acts as a positive regulator for PAN activity, recruiting the catalytic subunit pan2 to mRNA via its interaction with RNA and with pab1. The sequence is that of PAN2-PAN3 deadenylation complex subunit PAN3 from Aspergillus fumigatus (strain ATCC MYA-4609 / CBS 101355 / FGSC A1100 / Af293) (Neosartorya fumigata).